The primary structure comprises 64 residues: DNA gyrase inhibitor YacG (64 aa).

Positions 9, 12, 28, and 32 each coordinate Zn(2+). Residues 45-64 (KRIPSAGDLSDSDDWSEQQP) are disordered. Acidic residues predominate over residues 54-64 (SDSDDWSEQQP).

The protein belongs to the DNA gyrase inhibitor YacG family. Interacts with GyrB. Requires Zn(2+) as cofactor.

Functionally, inhibits all the catalytic activities of DNA gyrase by preventing its interaction with DNA. Acts by binding directly to the C-terminal domain of GyrB, which probably disrupts DNA binding by the gyrase. The sequence is that of DNA gyrase inhibitor YacG from Klebsiella pneumoniae (strain 342).